Here is a 605-residue protein sequence, read N- to C-terminus: MRIDQSIINEIKDKTDILDLVSEYVKLEKRGRNYIGLCPFHDEKTPSFTVSEDKQICHCFGCKKGGNVFQFTQEIKDISFVEAVKELGDRVNVAVDIEATQFNSNVQIASDDLQMIEMHELIQEFYYYALTKTVEGEQALTYLQERGFTDALIKERGIGFAPDSSHFCHDFLQKKGYDIELAYEAGLLSRNEENFSYYDRFRNRIMFPLKNAQGRIVGYSGRTYTGQEPKYLNSPETPIFQKRKLLYNLDKARKSIRKLDEIVLLEGFMDVIKSDTAGLKNVVATMGTQLSDEHITFIRKLTLNITLMFDGDFAGSEATLKTGQHLLQQGLNVFVIQLPSGMDPDEYIGKYGNDAFTAFVKNDKKSFAHYKVSILKDEIAHNDLSYERYLKELSHDISLMKSSILQQKALNDVAPFFNVSPEQLANEIQFNQAPANYYPDDEYGGYDEYGGYIEPEPIGMAQFDNLSRQEKAERAFLKHLMRDKDTFLNYYESVDKDNFTNQHFKYVFEVLHDFYAENDQYNISDAVQYVNSNELRETLISLEQYNLNDEPYENEIDDYVNVINEKGQETIESLNHKLREATRIGDVELQKYYLQQIVAKNKERM.

Residues 38–62 (CPFHDEKTPSFTVSEDKQICHCFGC) form a CHC2-type zinc finger. In terms of domain architecture, Toprim spans 260–341 (DEIVLLEGFM…NVFVIQLPSG (82 aa)). Mg(2+)-binding residues include Glu-266, Asp-310, and Asp-312.

The protein belongs to the DnaG primase family. Monomer. Interacts with DnaB. It depends on Zn(2+) as a cofactor. Mg(2+) is required as a cofactor.

It carries out the reaction ssDNA + n NTP = ssDNA/pppN(pN)n-1 hybrid + (n-1) diphosphate.. In terms of biological role, RNA polymerase that catalyzes the synthesis of short RNA molecules used as primers for DNA polymerase during DNA replication. In Staphylococcus aureus (strain MW2), this protein is DNA primase.